The primary structure comprises 503 residues: ATP synthase subunit alpha (503 aa).

170–177 (GDKQTGKT) provides a ligand contact to ATP.

The protein belongs to the ATPase alpha/beta chains family. As to quaternary structure, F-type ATPases have 2 components, CF(1) - the catalytic core - and CF(0) - the membrane proton channel. CF(1) has five subunits: alpha(3), beta(3), gamma(1), delta(1), epsilon(1). CF(0) has three main subunits: a(1), b(2) and c(9-12). The alpha and beta chains form an alternating ring which encloses part of the gamma chain. CF(1) is attached to CF(0) by a central stalk formed by the gamma and epsilon chains, while a peripheral stalk is formed by the delta and b chains.

The protein resides in the cell inner membrane. The catalysed reaction is ATP + H2O + 4 H(+)(in) = ADP + phosphate + 5 H(+)(out). Its function is as follows. Produces ATP from ADP in the presence of a proton gradient across the membrane. The alpha chain is a regulatory subunit. The protein is ATP synthase subunit alpha of Helicobacter pylori (strain Shi470).